The following is a 78-amino-acid chain: Acyl carrier protein (78 aa).

One can recognise a Carrier domain in the interval 2–77; the sequence is STIEERVKKI…AAIDYVTSHQ (76 aa). S37 is modified (O-(pantetheine 4'-phosphoryl)serine).

This sequence belongs to the acyl carrier protein (ACP) family. Post-translationally, 4'-phosphopantetheine is transferred from CoA to a specific serine of apo-ACP by AcpS. This modification is essential for activity because fatty acids are bound in thioester linkage to the sulfhydryl of the prosthetic group.

It is found in the cytoplasm. It functions in the pathway lipid metabolism; fatty acid biosynthesis. In terms of biological role, carrier of the growing fatty acid chain in fatty acid biosynthesis. The polypeptide is Acyl carrier protein (Pseudomonas fluorescens (strain SBW25)).